Reading from the N-terminus, the 374-residue chain is Translocating chain-associated membrane protein 1 (374 aa).

Residues 1-29 (MAIRKKSNKNPPLLSHEFLLQNHADIVSC) are Cytoplasmic-facing. Residues 30 to 50 (LAMLFLLGLMFEVTAKGAIIF) form a helical membrane-spanning segment. The Lumenal segment spans residues 51–76 (VALQYNVTRPATEEQATESASLYHYG). An N-linked (GlcNAc...) asparagine glycan is attached at Asn56. The helical transmembrane segment at 77-97 (IKDLATVLFYMLVAIIIHAII) threads the bilayer. Over 98 to 121 (QEYVLDKINRRMHFSKTKHSKFNE) the chain is Cytoplasmic. A TLC domain is found at 117 to 326 (SKFNESGQLS…NFQLRRWREH (210 aa)). Residues 122–142 (SGQLSAFYLFACVWGTFILIS) traverse the membrane as a helical segment. Over 143 to 159 (ENYISDPTILWRAYPHN) the chain is Lumenal. A helical membrane pass occupies residues 160-180 (LMTFQTKFFYISQLAYWLHAF). The Cytoplasmic segment spans residues 181–192 (PELYFQKTKKED). The chain crosses the membrane as a helical span at residues 193–213 (IPRQLVYIGLYLFHIAGAYLL). Over 214-217 (NLNH) the chain is Lumenal. The helical transmembrane segment at 218–238 (LGLVLLVLHYFVEFLFHISRL) threads the bilayer. Residues 239–251 (FYFSDEKYQKGFS) are Cytoplasmic-facing. A helical transmembrane segment spans residues 252–272 (LWAVLFVLGRLLTLILSVLTV). Over 273–297 (GFGLARAENQKLDFSTGNFNVLAVR) the chain is Lumenal. Residues 298-318 (IAVLASICITQAFMMWKFINF) traverse the membrane as a helical segment. Residues 319–374 (QLRRWREHSAFQAPPVKRKPAVTKGRSSRKGTENGVNGTVTSNGADSPRNRKEKSS) are Cytoplasmic-facing. The interval 333-374 (PVKRKPAVTKGRSSRKGTENGVNGTVTSNGADSPRNRKEKSS) is disordered. The segment covering 334–347 (VKRKPAVTKGRSSR) has biased composition (basic residues). Positions 352 to 363 (NGVNGTVTSNGA) are enriched in polar residues. The residue at position 365 (Ser365) is a Phosphoserine.

It belongs to the TRAM family. In terms of assembly, interacts with SEC61B. May interact with Derlin-1/DERL1. In terms of processing, N-glycosylated.

The protein localises to the endoplasmic reticulum membrane. Functionally, involved in the translocation of nascent protein chains into or through the endoplasmic reticulum (ER) membrane by facilitating the proper chain positioning at the SEC61 channel. Regulates the exposure of nascent secretory protein chain to the cytosol during translocation into the ER. May affect the phospholipid bilayer in the vicinity of the lateral gate of the SEC61 channel, thereby facilitating ER protein transport. Intimately associates with transmembrane (TM) domain of nascent membrane proteins during the entire integration process into the ER membrane. Associates with the second TM domain of G-protein-coupled receptor opsin/OPSD nascent chain in the ER membrane, which may facilitate its integration into the membrane. Under conditions of ER stress, participates in the disposal of misfolded ER membrane proteins during the unfolded protein response (UPR), an integrated stress response (ISR) pathway, by selectively retrotranslocating misfolded ER-membrane proteins from the ER into the cytosol where they are ubiquitinated and degraded by the proteasome. The polypeptide is Translocating chain-associated membrane protein 1 (Mus musculus (Mouse)).